The sequence spans 542 residues: MPNVVDPPQISFAAKDMDLTEWEGDILAVLVTETDVSKATSSSSRFTNAAAALAKLDGELGGLLSEASAEEEFAGRAGQSVALRLPTAPGLHGFKRVCLVGVGNNMPSSAAACRSTGETIAAVAKSAQARSAAVALASPPPGWVQGEDLRLNAAAAVASGVVLGLHEDRRYKSDSKKVHLKQVDLIGFGSGQEMGRKLQYANHVSSAVIFAKELVNSPANVLTPAVLAEEASNIASSYSDVLTATILDEEKCRELKMGSYLAVAAASANPPHFIHLCYKPPGGNVKRKLAIVGKGLTFDRFYLSLDNLLIVTKFVCIGGYNIKIGAVTTIELMKKDMGGSAALFGAAKALGQIKPPGVEVHFISAACENMISGTGMRPGDIVTASNGKTIEVDNTDAEGRLTLADALVYACKLGVDKIIDLATLTGYCRIALGPSIAGILTPSDELDKEVAAAYEASGEKFWRLPLEESYWEQMKSSVADMLNTGSPLGGAITAGLFLKQFVDEKVKWMHVDMAGPVWNYKKQEATGFGVSTLVEWVLINSS.

The Mn(2+) site is built by Lys-294 and Asp-299. Lys-323 is an active-site residue. Mn(2+)-binding residues include Asp-336, Asp-396, and Glu-398. The active site involves Arg-400.

The protein belongs to the peptidase M17 family. Homohexamer (dimer of homotrimers). Mn(2+) is required as a cofactor.

It is found in the cytoplasm. It carries out the reaction Release of an N-terminal amino acid, Xaa-|-Yaa-, in which Xaa is preferably Leu, but may be other amino acids including Pro although not Arg or Lys, and Yaa may be Pro. Amino acid amides and methyl esters are also readily hydrolyzed, but rates on arylamides are exceedingly low.. The enzyme catalyses Release of N-terminal proline from a peptide.. Its function is as follows. Presumably involved in the processing and regular turnover of intracellular proteins. Catalyzes the removal of unsubstituted N-terminal amino acids from various peptides. The chain is Putative leucine aminopeptidase 1 from Oryza sativa subsp. japonica (Rice).